Here is a 696-residue protein sequence, read N- to C-terminus: GPI mannosyltransferase 4 (696 aa).

6 helical membrane-spanning segments follow: residues 100–120 (WQLE…IYTL), 125–142 (NDYC…RFEI), 149–169 (SSWI…EMAM), 185–205 (NTVV…ESIS), 227–247 (AMST…LFGA), and 338–358 (YVHL…ASLG).

It belongs to the glycosyltransferase 22 family. PIGZ subfamily.

It localises to the endoplasmic reticulum membrane. Its pathway is glycolipid biosynthesis; glycosylphosphatidylinositol-anchor biosynthesis. Functionally, mannosyltransferase involved in glycosylphosphatidylinositol-anchor biosynthesis. Transfers a fourth mannose to some trimannosyl-GPIs during GPI precursor assembly. The polypeptide is GPI mannosyltransferase 4 (Drosophila melanogaster (Fruit fly)).